The chain runs to 766 residues: 5-methyltetrahydropteroyltriglutamate--homocysteine methyltransferase (766 aa).

5-methyltetrahydropteroyltri-L-glutamate is bound by residues 16–19 (RELK) and Lys-124. L-homocysteine-binding positions include 445-447 (IGS) and Glu-498. Residues 445 to 447 (IGS) and Glu-498 each bind L-methionine. Residues 529-530 (RC) and Trp-575 contribute to the 5-methyltetrahydropteroyltri-L-glutamate site. Asp-613 is an L-homocysteine binding site. Asp-613 contacts L-methionine. A 5-methyltetrahydropteroyltri-L-glutamate-binding site is contributed by Glu-619. The Zn(2+) site is built by His-655, Cys-657, and Glu-679. His-708 acts as the Proton donor in catalysis. Residue Cys-740 coordinates Zn(2+).

It belongs to the vitamin-B12 independent methionine synthase family. Zn(2+) is required as a cofactor.

The catalysed reaction is 5-methyltetrahydropteroyltri-L-glutamate + L-homocysteine = tetrahydropteroyltri-L-glutamate + L-methionine. The protein operates within amino-acid biosynthesis; L-methionine biosynthesis via de novo pathway; L-methionine from L-homocysteine (MetE route): step 1/1. Functionally, catalyzes the transfer of a methyl group from 5-methyltetrahydrofolate to homocysteine resulting in methionine formation. This chain is 5-methyltetrahydropteroyltriglutamate--homocysteine methyltransferase, found in Pseudomonas syringae pv. tomato (strain ATCC BAA-871 / DC3000).